The sequence spans 619 residues: (-)-camphene synthase, chloroplastic (619 aa).

The N-terminal 47 residues, Met-1–Arg-47, are a transit peptide targeting the chloroplast. Mg(2+) contacts are provided by Asp-370, Asp-374, and Asp-522. Positions Asp-370 to Asp-374 match the DDXXD motif motif.

The protein belongs to the terpene synthase family. Tpsd subfamily. Mg(2+) serves as cofactor. Mn(2+) is required as a cofactor.

The protein resides in the plastid. It is found in the chloroplast. It catalyses the reaction (2E)-geranyl diphosphate = (1S,4R)-camphene + diphosphate. The enzyme catalyses (2E)-geranyl diphosphate = (1R,5R)-alpha-pinene + diphosphate. It carries out the reaction (2E)-geranyl diphosphate = tricyclene + diphosphate. The catalysed reaction is (2E)-geranyl diphosphate = beta-myrcene + diphosphate. It catalyses the reaction (2E)-geranyl diphosphate = (1S,5S)-beta-pinene + diphosphate. The enzyme catalyses (2E)-geranyl diphosphate = (1S,5S)-alpha-pinene + diphosphate. It participates in terpene metabolism; oleoresin biosynthesis. Its pathway is secondary metabolite biosynthesis; terpenoid biosynthesis. In terms of biological role, monoterpene synthase (TPS) involved in the biosynthesis of monoterpene natural products included in conifer oleoresin secretions and volatile emissions; these compounds contribute to biotic and abiotic stress defense against herbivores and pathogens. Catalyzes the conversion of (2E)-geranyl diphosphate (GPP) to (-)-camphene, (+)-alpha-pinene and (-)-alpha-pinene, and, to a lower extent, to tricyclene, myrcene and (-)-beta-pinene. The chain is (-)-camphene synthase, chloroplastic from Pinus contorta (Shore pine).